The sequence spans 658 residues: Endoglin (658 aa).

The signal sequence occupies residues 1-25 (MDRGTLPLAVALLLASCSLSPTSLA). The segment at 26 to 46 (ETVHCDLQPVGPERGEVTYTT) is OR1, N-terminal part. Positions 26–337 (ETVHCDLQPV…SSCGGRLQTS (312 aa)) are required for interaction with GDF2. The Extracellular portion of the chain corresponds to 26-586 (ETVHCDLQPV…PDLSGCTSKG (561 aa)). Intrachain disulfides connect Cys-30–Cys-207, Cys-53–Cys-182, Cys-242–Cys-330, Cys-350–Cys-382, Cys-363–Cys-442, Cys-394–Cys-412, and Cys-493–Cys-549. The OR2 stretch occupies residues 47–199 (SQVSKGCVAQ…MGRTLEWRPR (153 aa)). 4 N-linked (GlcNAc...) asparagine glycosylation sites follow: Asn-88, Asn-102, Asn-121, and Asn-134. An OR1, C-terminal part region spans residues 200–330 (TPALVRGCHL…SIVSLHASSC (131 aa)). Residues 270–282 (QIWTTGEYSFKIF) are essential for interaction with GDF2. Asn-307 carries an N-linked (GlcNAc...) asparagine glycan. The region spanning 363–533 (CADDAMTLVL…PEGDPRFSFL (171 aa)) is the ZP domain. The Cell attachment site signature appears at 399-401 (RGD). Residues 587–611 (LVLPAVLGITFGAFLIGALLTAALW) form a helical membrane-spanning segment. Over 612-658 (YIYSHTRSPSKREPVVAVAAPASSESSSTNHSIGSTQSTPCSTSSMA) the chain is Cytoplasmic. Residues 626-639 (VVAVAAPASSESSS) show a composition bias toward low complexity. The segment at 626 to 658 (VVAVAAPASSESSSTNHSIGSTQSTPCSTSSMA) is disordered. The segment covering 640–658 (TNHSIGSTQSTPCSTSSMA) has biased composition (polar residues). Ser-646 and Ser-649 each carry phosphoserine; by TGFBR1.

Homodimer; disulfide-linked. Forms a heteromeric complex with the signaling receptors for transforming growth factor-beta: TGFBR1 and/or TGFBR2. It is able to bind TGFB1 and TGFB2 with high affinity, but not TGFB3. Interacts with GDF2, forming a heterotetramer with a 2:2 stoichiometry. Interacts with ACVRL1. Can form a heteromeric complex with GDF2 and ACVRL1. Interacts with BMP10. Interacts with DYNLT4. Interacts with ARRB2. In terms of tissue distribution, detected on umbilical veil endothelial cells. Detected in placenta (at protein level). Detected on endothelial cells.

It localises to the cell membrane. Functionally, vascular endothelium glycoprotein that plays an important role in the regulation of angiogenesis. Required for normal structure and integrity of adult vasculature. Regulates the migration of vascular endothelial cells. Required for normal extraembryonic angiogenesis and for embryonic heart development. May regulate endothelial cell shape changes in response to blood flow, which drive vascular remodeling and establishment of normal vascular morphology during angiogenesis. May play a critical role in the binding of endothelial cells to integrins and/or other RGD receptors. Acts as a TGF-beta coreceptor and is involved in the TGF-beta/BMP signaling cascade that ultimately leads to the activation of SMAD transcription factors. Required for GDF2/BMP9 signaling through SMAD1 in endothelial cells and modulates TGFB1 signaling through SMAD3. The protein is Endoglin (ENG) of Homo sapiens (Human).